The chain runs to 385 residues: 2-oxoglutarate-dependent dioxygenase AFUA_1G01000 (385 aa).

In terms of domain architecture, Fe2OG dioxygenase spans 203–327 (PSDDFLRLLR…RYSVLVGTRP (125 aa)). The Fe cation site is built by His-230, Asp-232, and His-304. Arg-318 provides a ligand contact to 2-oxoglutarate.

This sequence belongs to the iron/ascorbate-dependent oxidoreductase family. Requires Fe(2+) as cofactor.

2-oxoglutarate-dependent dioxygenase; part of the gene cluster that mediates the biosynthesis of fumigermin that inhibits germination of spores of the inducing S.rapamycinicus, and thus helps the fungus to defend resources in the shared habitat against a bacterial competitor. The partially reducing polyketide synthase fngA alone is sufficient for the production of fumigermin. FgnA catalyzes the condensation of 3 malonyl-CoA units to an acetyl-CoA starter, and 3 methylations to yield fumigermin. It is remarkable that the five cluster genes including fgnA are conserved in distantly related fungi, supporting the assumption of a fumigermin cluster; it is thus possible that originally all five genes were functional, but that the genes encoding tailoring enzymes became inactive from mutations, similar to the case of the fgnA gene in strains A1163 and Af293. The chain is 2-oxoglutarate-dependent dioxygenase AFUA_1G01000 from Aspergillus fumigatus (strain ATCC MYA-4609 / CBS 101355 / FGSC A1100 / Af293) (Neosartorya fumigata).